We begin with the raw amino-acid sequence, 217 residues long: Adenylate kinase (217 aa).

10–15 (GIGKGT) contacts ATP. The tract at residues 30–59 (ATGDIFRKNFQENTPLGKESKKFINKGLLV) is NMP. Residues Thr31, Arg36, 57–59 (LLV), 85–88 (GFPR), and Gln92 each bind AMP. The LID stretch occupies residues 126 to 163 (GRRICSHCGKVYHLDNLPPKIEGICDKDQKKLIQREDD). Residue Arg127 participates in ATP binding. Cys130 and Cys133 together coordinate Zn(2+). 136–137 (VY) is a binding site for ATP. Cys150 and Asp153 together coordinate Zn(2+). Arg160 and Arg171 together coordinate AMP. Gln199 is an ATP binding site.

It belongs to the adenylate kinase family. Monomer.

It is found in the cytoplasm. The enzyme catalyses AMP + ATP = 2 ADP. Its pathway is purine metabolism; AMP biosynthesis via salvage pathway; AMP from ADP: step 1/1. Functionally, catalyzes the reversible transfer of the terminal phosphate group between ATP and AMP. Plays an important role in cellular energy homeostasis and in adenine nucleotide metabolism. The polypeptide is Adenylate kinase (Phytoplasma australiense).